A 343-amino-acid polypeptide reads, in one-letter code: tRNA N6-adenosine threonylcarbamoyltransferase (343 aa).

Residues His111 and His115 each contribute to the Fe cation site. Substrate-binding positions include 134–138 (LVSGG), Asp167, Gly180, and Asn276. Position 304 (Asp304) interacts with Fe cation.

It belongs to the KAE1 / TsaD family. It depends on Fe(2+) as a cofactor.

It localises to the cytoplasm. It carries out the reaction L-threonylcarbamoyladenylate + adenosine(37) in tRNA = N(6)-L-threonylcarbamoyladenosine(37) in tRNA + AMP + H(+). In terms of biological role, required for the formation of a threonylcarbamoyl group on adenosine at position 37 (t(6)A37) in tRNAs that read codons beginning with adenine. Is involved in the transfer of the threonylcarbamoyl moiety of threonylcarbamoyl-AMP (TC-AMP) to the N6 group of A37, together with TsaE and TsaB. TsaD likely plays a direct catalytic role in this reaction. The sequence is that of tRNA N6-adenosine threonylcarbamoyltransferase from Chromohalobacter salexigens (strain ATCC BAA-138 / DSM 3043 / CIP 106854 / NCIMB 13768 / 1H11).